A 106-amino-acid polypeptide reads, in one-letter code: L-rhamnose mutarotase (106 aa).

Position 20 (tyrosine 20) interacts with substrate. Catalysis depends on histidine 24, which acts as the Proton donor. Substrate-binding positions include tyrosine 43 and 78-79 (WW).

It belongs to the rhamnose mutarotase family. Homodimer.

The protein resides in the cytoplasm. The catalysed reaction is alpha-L-rhamnose = beta-L-rhamnose. It participates in carbohydrate metabolism; L-rhamnose metabolism. Functionally, involved in the anomeric conversion of L-rhamnose. The polypeptide is L-rhamnose mutarotase (Rhizobium etli (strain ATCC 51251 / DSM 11541 / JCM 21823 / NBRC 15573 / CFN 42)).